Here is a 619-residue protein sequence, read N- to C-terminus: tRNA uridine 5-carboxymethylaminomethyl modification enzyme MnmG (619 aa).

FAD-binding positions include 14–19 (GAGHAG), valine 126, and serine 181. 273-287 (GPRYCPSIEDKIMRF) lines the NAD(+) pocket. FAD is bound at residue glutamine 370.

The protein belongs to the MnmG family. Homodimer. Heterotetramer of two MnmE and two MnmG subunits. It depends on FAD as a cofactor.

Its subcellular location is the cytoplasm. NAD-binding protein involved in the addition of a carboxymethylaminomethyl (cmnm) group at the wobble position (U34) of certain tRNAs, forming tRNA-cmnm(5)s(2)U34. The chain is tRNA uridine 5-carboxymethylaminomethyl modification enzyme MnmG from Syntrophotalea carbinolica (strain DSM 2380 / NBRC 103641 / GraBd1) (Pelobacter carbinolicus).